We begin with the raw amino-acid sequence, 214 residues long: MNSQNSQIQPQARYILPSFIEHSSFGVKESNPYNKLFEERIIFLGVQVDDASANDIMAQLLVLESLDPDRDITMYINSPGGGFTSLMAIYDTMQYVRADIQTVCLGQAASAAAVLLAAGTPGKRMALPNARVLIHQPSLSGVIQGQFSDLEIQAAEIERMRTLMETTLARHTGKDAGVIRKDTDRDKILTAEEAKDYGIIDTVLEYRKLSAQTA.

S110 functions as the Nucleophile in the catalytic mechanism. The active site involves H135.

It belongs to the peptidase S14 family. Fourteen ClpP subunits assemble into 2 heptameric rings which stack back to back to give a disk-like structure with a central cavity, resembling the structure of eukaryotic proteasomes.

Its subcellular location is the cytoplasm. It carries out the reaction Hydrolysis of proteins to small peptides in the presence of ATP and magnesium. alpha-casein is the usual test substrate. In the absence of ATP, only oligopeptides shorter than five residues are hydrolyzed (such as succinyl-Leu-Tyr-|-NHMec, and Leu-Tyr-Leu-|-Tyr-Trp, in which cleavage of the -Tyr-|-Leu- and -Tyr-|-Trp bonds also occurs).. Cleaves peptides in various proteins in a process that requires ATP hydrolysis. Has a chymotrypsin-like activity. Plays a major role in the degradation of misfolded proteins. The protein is ATP-dependent Clp protease proteolytic subunit 2 of Mycobacterium bovis (strain ATCC BAA-935 / AF2122/97).